The sequence spans 287 residues: Ribosomal RNA-processing protein 8 (287 aa).

The segment at 1-62 is disordered; sequence MTTEENKTSR…SAPSKRPKPS (62 aa). The span at 9–21 shows a compositional bias: basic residues; it reads SRNRKRKRQRNPK. Basic and acidic residues predominate over residues 35–46; it reads QNEKKNQRDTKN. Residues H107, G142, D160, D172, M173, and C189 each contribute to the S-adenosyl-L-methionine site.

The protein belongs to the methyltransferase superfamily. RRP8 family.

It localises to the nucleus. It is found in the nucleolus. Functionally, probable methyltransferase required to silence rDNA. This is Ribosomal RNA-processing protein 8 from Arabidopsis thaliana (Mouse-ear cress).